The primary structure comprises 62 residues: Conotoxin Lt5.5 (62 aa).

A signal peptide spans 1 to 22 (MRCLQVFIIFLLLIPSPPSVDA). Positions 23 to 48 (QRKTKDDVPLASFHDNAKRTLKRLWN) are excised as a propeptide.

The protein belongs to the conotoxin T superfamily. In terms of processing, contains 2 disulfide bonds that can be either 'C1-C3, C2-C4' or 'C1-C4, C2-C3', since these disulfide connectivities have been observed for conotoxins with cysteine framework V (for examples, see AC P0DQQ7 and AC P81755). Expressed by the venom duct.

The protein localises to the secreted. The chain is Conotoxin Lt5.5 from Conus litteratus (Lettered cone).